The sequence spans 282 residues: Bacterial lipoprotein FTN_1103 (282 aa).

Residues 1–28 form the signal peptide; it reads MKYGNLMMTKKKLLIGMVTISGIVILGS. Residue C29 is the site of N-palmitoyl cysteine attachment. C29 carries S-diacylglycerol cysteine lipidation.

It localises to the cell membrane. Its function is as follows. Stimulates the host immune inflammatory signaling system allowing the host to combat the bacteria. Stimulates mouse interleukin-6 (Il6) production. This is Bacterial lipoprotein FTN_1103 from Francisella tularensis subsp. novicida (strain U112).